Here is a 220-residue protein sequence, read N- to C-terminus: MAKNRFNQSWLHDHINDPYVKMAQREGYRARAAYKLKEIDEQDKLIRPGQVIVDLGAAPGSWSQYARNKLAQGRRRDAVREGGIDGTIIALDMLPMEPIADVHFIQGDFREETVLHQLEEVLAGRSVDLVISDMAPNLSGVAVADAARIEHVCDLALEFAQNHLKPDGALLVKCFHGSGYSQIVEKFKHQFKTVAPRKPKASRDKSSETFILGRHLKLPR.

Residues Gly60, Trp62, Asp92, Asp108, and Asp133 each contribute to the S-adenosyl-L-methionine site. Lys173 (proton acceptor) is an active-site residue.

The protein belongs to the class I-like SAM-binding methyltransferase superfamily. RNA methyltransferase RlmE family.

The protein localises to the cytoplasm. The catalysed reaction is uridine(2552) in 23S rRNA + S-adenosyl-L-methionine = 2'-O-methyluridine(2552) in 23S rRNA + S-adenosyl-L-homocysteine + H(+). Specifically methylates the uridine in position 2552 of 23S rRNA at the 2'-O position of the ribose in the fully assembled 50S ribosomal subunit. The protein is Ribosomal RNA large subunit methyltransferase E of Burkholderia thailandensis (strain ATCC 700388 / DSM 13276 / CCUG 48851 / CIP 106301 / E264).